The sequence spans 236 residues: Cytochrome c biogenesis ATP-binding export protein CcmA (236 aa).

The ABC transporter domain maps to 14–235 (LEATGLQVAR…SAGDRVTGTE (222 aa)). Residue 46 to 53 (GANGSGKT) coordinates ATP.

Belongs to the ABC transporter superfamily. CcmA exporter (TC 3.A.1.107) family. As to quaternary structure, the complex is composed of two ATP-binding proteins (CcmA) and two transmembrane proteins (CcmB).

The protein localises to the cell inner membrane. It carries out the reaction heme b(in) + ATP + H2O = heme b(out) + ADP + phosphate + H(+). Part of the ABC transporter complex CcmAB involved in the biogenesis of c-type cytochromes; once thought to export heme, this seems not to be the case, but its exact role is uncertain. Responsible for energy coupling to the transport system. The sequence is that of Cytochrome c biogenesis ATP-binding export protein CcmA from Alkalilimnicola ehrlichii (strain ATCC BAA-1101 / DSM 17681 / MLHE-1).